An 800-amino-acid chain; its full sequence is Probable inorganic carbon transporter subunit DabA (800 aa).

Cys329, Asp331, His488, and Cys503 together coordinate Zn(2+).

It belongs to the inorganic carbon transporter (TC 9.A.2) DabA family. In terms of assembly, forms a complex with DabB. The cofactor is Zn(2+).

Its subcellular location is the cell inner membrane. Its function is as follows. Part of an energy-coupled inorganic carbon pump. The sequence is that of Probable inorganic carbon transporter subunit DabA from Roseobacter denitrificans (strain ATCC 33942 / OCh 114) (Erythrobacter sp. (strain OCh 114)).